Consider the following 160-residue polypeptide: Phosphopantetheine adenylyltransferase (160 aa).

A substrate-binding site is contributed by serine 8. Residues 8-9 (SF) and histidine 16 contribute to the ATP site. Substrate-binding residues include lysine 40, leucine 74, and lysine 88. Residues 89–91 (GLR), glutamate 99, and 124–130 (YSFVSST) each bind ATP.

It belongs to the bacterial CoaD family. As to quaternary structure, homohexamer. Mg(2+) is required as a cofactor.

The protein localises to the cytoplasm. The catalysed reaction is (R)-4'-phosphopantetheine + ATP + H(+) = 3'-dephospho-CoA + diphosphate. It participates in cofactor biosynthesis; coenzyme A biosynthesis; CoA from (R)-pantothenate: step 4/5. Functionally, reversibly transfers an adenylyl group from ATP to 4'-phosphopantetheine, yielding dephospho-CoA (dPCoA) and pyrophosphate. The protein is Phosphopantetheine adenylyltransferase of Thermus thermophilus (strain ATCC BAA-163 / DSM 7039 / HB27).